Here is a 184-residue protein sequence, read N- to C-terminus: Tumor necrosis factor receptor superfamily member 13C (184 aa).

At 1 to 78 the chain is on the extracellular side; that stretch reads MRRGPRSLRG…EAALPLPGLL (78 aa). A TNFR-Cys; truncated repeat occupies 18-35; it reads PCVPAECFDLLVRHCVAC. 2 disulfide bridges follow: Cys-19–Cys-32 and Cys-24–Cys-35. Residues 26–31 form an essential for TNFSF13B/TALL1/BAFF/BLyS binding region; it reads DLLVRH. The segment at 43-62 is disordered; sequence PKPAGASSPAPRTALQPQES. The helical; Signal-anchor for type III membrane protein transmembrane segment at 79–99 threads the bilayer; that stretch reads FGAPALLGLALVLALVLVGLV. At 100–184 the chain is on the cytoplasmic side; the sequence is SWRRRQRRLR…TTKTAGPEQQ (85 aa). Residues 107 to 184 are disordered; the sequence is RLRGASSAEA…TTKTAGPEQQ (78 aa). Positions 118–128 are enriched in basic and acidic residues; it reads DGDKDAPEPLD. The span at 168–184 shows a compositional bias: polar residues; sequence LGSTELVTTKTAGPEQQ.

Highly expressed in spleen and lymph node, and in resting B-cells. Detected at lower levels in activated B-cells, resting CD4+ T-cells, in thymus and peripheral blood leukocytes.

The protein resides in the membrane. Its function is as follows. B-cell receptor specific for TNFSF13B/TALL1/BAFF/BLyS. Promotes the survival of mature B-cells and the B-cell response. The sequence is that of Tumor necrosis factor receptor superfamily member 13C (TNFRSF13C) from Homo sapiens (Human).